We begin with the raw amino-acid sequence, 296 residues long: Glycine--tRNA ligase alpha subunit (296 aa).

Belongs to the class-II aminoacyl-tRNA synthetase family. In terms of assembly, tetramer of two alpha and two beta subunits.

It localises to the cytoplasm. It carries out the reaction tRNA(Gly) + glycine + ATP = glycyl-tRNA(Gly) + AMP + diphosphate. In Listeria monocytogenes serotype 4b (strain CLIP80459), this protein is Glycine--tRNA ligase alpha subunit.